The sequence spans 420 residues: Napsin-A (420 aa).

The N-terminal stretch at M1–T25 is a signal peptide. Residues L26 to D63 constitute a propeptide, activation peptide. Residues Y78–A399 enclose the Peptidase A1 domain. N90 carries an N-linked (GlcNAc...) asparagine glycan. The active site involves D96. Residues C109 and C116 are joined by a disulfide bond. N-linked (GlcNAc...) asparagine glycosylation occurs at N133. C274 and C278 form a disulfide bridge. D283 is a catalytic residue. A disulfide bond links C317 and C354. N-linked (GlcNAc...) asparagine glycosylation occurs at N336.

Belongs to the peptidase A1 family. Expressed predominantly in adult lung (type II pneumocytes) and kidney and in fetal lung. Low levels in adult spleen and very low levels in peripheral blood leukocytes.

It localises to the secreted. Functionally, may be involved in processing of pneumocyte surfactant precursors. The chain is Napsin-A (NAPSA) from Homo sapiens (Human).